The chain runs to 219 residues: MSRISKAEMSKLLSVYFIMGSNNCTKDPLQVLREALEGGITIFQFREKGEGALTGEERICFAKELQAICKEYGVPFIVNDDVELALELDADGVHVGQDDEGITSVREKMGDKIIGVSTHTIEEARWAIENGADYLGVGPIFPTSTKKDTKAVQGTKGLAHFREQGITIPIVGIGGISIENTASVIEAGADGISVISAISLAESAYESTKKLVEEVSKSL.

4-amino-2-methyl-5-(diphosphooxymethyl)pyrimidine-binding positions include 44-48 (QFREK) and asparagine 79. 2 residues coordinate Mg(2+): aspartate 80 and aspartate 99. A 4-amino-2-methyl-5-(diphosphooxymethyl)pyrimidine-binding site is contributed by serine 117. 143 to 145 (TST) serves as a coordination point for 2-[(2R,5Z)-2-carboxy-4-methylthiazol-5(2H)-ylidene]ethyl phosphate. Residue lysine 146 participates in 4-amino-2-methyl-5-(diphosphooxymethyl)pyrimidine binding. Residues glycine 175 and 195-196 (IS) each bind 2-[(2R,5Z)-2-carboxy-4-methylthiazol-5(2H)-ylidene]ethyl phosphate.

The protein belongs to the thiamine-phosphate synthase family. The cofactor is Mg(2+).

The enzyme catalyses 2-[(2R,5Z)-2-carboxy-4-methylthiazol-5(2H)-ylidene]ethyl phosphate + 4-amino-2-methyl-5-(diphosphooxymethyl)pyrimidine + 2 H(+) = thiamine phosphate + CO2 + diphosphate. It carries out the reaction 2-(2-carboxy-4-methylthiazol-5-yl)ethyl phosphate + 4-amino-2-methyl-5-(diphosphooxymethyl)pyrimidine + 2 H(+) = thiamine phosphate + CO2 + diphosphate. It catalyses the reaction 4-methyl-5-(2-phosphooxyethyl)-thiazole + 4-amino-2-methyl-5-(diphosphooxymethyl)pyrimidine + H(+) = thiamine phosphate + diphosphate. It functions in the pathway cofactor biosynthesis; thiamine diphosphate biosynthesis; thiamine phosphate from 4-amino-2-methyl-5-diphosphomethylpyrimidine and 4-methyl-5-(2-phosphoethyl)-thiazole: step 1/1. Functionally, condenses 4-methyl-5-(beta-hydroxyethyl)thiazole monophosphate (THZ-P) and 2-methyl-4-amino-5-hydroxymethyl pyrimidine pyrophosphate (HMP-PP) to form thiamine monophosphate (TMP). The protein is Thiamine-phosphate synthase of Bacillus cereus (strain ZK / E33L).